The primary structure comprises 288 residues: Disulfide-bond oxidoreductase YghU (288 aa).

Glutathione is bound by residues asparagine 26, threonine 52–asparagine 54, glutamine 87, isoleucine 101, glutamate 117–serine 118, glutamine 151, and arginine 178. The GST N-terminal domain occupies glutamine 46–leucine 133. Residues lysine 139 to leucine 265 form the GST C-terminal domain. The segment at arginine 260–glycine 288 is disordered. Residues glutamine 268–glycine 288 are compositionally biased toward basic and acidic residues.

Belongs to the GST superfamily. Nu-class GSH transferase family. In terms of assembly, homodimer.

Its function is as follows. Exhibits a robust glutathione (GSH)-dependent disulfide-bond reductase activity toward the model substrate, 2-hydroxyethyl disulfide; the actual physiological substrates are not known. Also displays a modest GSH-dependent peroxidase activity toward several organic hydroperoxides, such as cumene hydroperoxide and linoleic acid 13(S)-hydroperoxide, but does not reduce H(2)O(2) or tert-butyl hydroperoxide at appreciable rates. Exhibits little or no GSH transferase activity with most typical electrophilic substrates, and has no detectable transferase activity toward 1-chloro-2,4-dinitrobenzene (CDNB) with glutathionylspermidine (GspSH) as the nucleophilic substrate. This chain is Disulfide-bond oxidoreductase YghU (yghU), found in Escherichia coli (strain K12).